The sequence spans 496 residues: 1-aminocyclopropane-1-carboxylate synthase 4 (496 aa).

Lysine 300 carries the N6-(pyridoxal phosphate)lysine modification.

It belongs to the class-I pyridoxal-phosphate-dependent aminotransferase family. Pyridoxal 5'-phosphate is required as a cofactor. As to expression, expressed in leaves. Expressed in shoots and leaf blades. Expressed at low levels in leaf sheaths.

It catalyses the reaction S-adenosyl-L-methionine = 1-aminocyclopropane-1-carboxylate + S-methyl-5'-thioadenosine + H(+). It functions in the pathway alkene biosynthesis; ethylene biosynthesis via S-adenosyl-L-methionine; ethylene from S-adenosyl-L-methionine: step 1/2. Catalyzes the formation of 1-aminocyclopropane-1-carboxylate, a direct precursor of ethylene in higher plants. The protein is 1-aminocyclopropane-1-carboxylate synthase 4 of Oryza sativa subsp. japonica (Rice).